Here is a 957-residue protein sequence, read N- to C-terminus: Sorting nexin-13 (957 aa).

The region spanning 97-284 is the PXA domain; that stretch reads ANIIDEPLQQ…YVIWMIRDSN (188 aa). The RGS domain maps to 373 to 511; it reads PLDSILVDNV…SFRQNALYVR (139 aa). The region spanning 559–680 is the PX domain; sequence VQLHAYISDT…DFLENKAYSK (122 aa). Positions 601, 603, 628, and 642 each coordinate a 1,2-diacyl-sn-glycero-3-phospho-(1D-myo-inositol-3-phosphate).

Belongs to the sorting nexin family.

The protein resides in the early endosome membrane. May be involved in several stages of intracellular trafficking. Acts as a GAP for Galphas. May play a role in endosome homeostasis. In Mus musculus (Mouse), this protein is Sorting nexin-13 (Snx13).